A 489-amino-acid chain; its full sequence is Rhamnulokinase (489 aa).

13-17 (ASSGR) contributes to the ATP binding site. A disulfide bond links cysteine 68 and cysteine 222. Residues glycine 83 and 236–238 (HDT) contribute to the substrate site. Residue aspartate 237 is the Proton acceptor of the active site. Threonine 259 provides a ligand contact to ATP. Asparagine 296 serves as a coordination point for substrate. Glutamine 304 lines the ATP pocket. Cysteines 353 and 370 form a disulfide. Position 402 (glycine 402) interacts with ATP. An intrachain disulfide couples cysteine 413 to cysteine 417.

Belongs to the rhamnulokinase family. In terms of assembly, monomer. The cofactor is Mg(2+).

The enzyme catalyses L-rhamnulose + ATP = L-rhamnulose 1-phosphate + ADP + H(+). Its pathway is carbohydrate degradation; L-rhamnose degradation; glycerone phosphate from L-rhamnose: step 2/3. Functionally, involved in the catabolism of L-rhamnose (6-deoxy-L-mannose). Catalyzes the transfer of the gamma-phosphate group from ATP to the 1-hydroxyl group of L-rhamnulose to yield L-rhamnulose 1-phosphate. In Escherichia coli O17:K52:H18 (strain UMN026 / ExPEC), this protein is Rhamnulokinase.